The following is a 170-amino-acid chain: Cytochrome c-type biogenesis protein CcmE (170 aa).

The Cytoplasmic portion of the chain corresponds to 1 to 7 (MTRKKRR). A helical; Signal-anchor for type II membrane protein transmembrane segment spans residues 8 to 28 (LILIAACGSVLALAVGLILYA). The Periplasmic portion of the chain corresponds to 29 to 170 (MSGSIVFFRS…DSTLGPRSER (142 aa)). Positions 122 and 126 each coordinate heme. The segment at 132–170 (ADALKAQGRWQEGGPNRGGPAPKPATAAADSTLGPRSER) is disordered.

It belongs to the CcmE/CycJ family.

It is found in the cell inner membrane. Its function is as follows. Heme chaperone required for the biogenesis of c-type cytochromes. Transiently binds heme delivered by CcmC and transfers the heme to apo-cytochromes in a process facilitated by CcmF and CcmH. The protein is Cytochrome c-type biogenesis protein CcmE of Methylobacterium radiotolerans (strain ATCC 27329 / DSM 1819 / JCM 2831 / NBRC 15690 / NCIMB 10815 / 0-1).